The chain runs to 940 residues: Bifunctional uridylyltransferase/uridylyl-removing enzyme (940 aa).

The segment at 1–379 is uridylyltransferase; sequence MPRRLRPTRL…PGARPKRKAL (379 aa). The interval 380 to 736 is uridylyl-removing; the sequence is DVEGFYEDGG…GQVRPGSNAA (357 aa). The HD domain maps to 496-618; it reads VDEHTLRAVG…VENPERLRLL (123 aa). ACT domains are found at residues 737 to 821 and 848 to 929; these read EVVI…PRRG and VVEA…AARP.

Belongs to the GlnD family. Mg(2+) serves as cofactor.

It carries out the reaction [protein-PII]-L-tyrosine + UTP = [protein-PII]-uridylyl-L-tyrosine + diphosphate. The enzyme catalyses [protein-PII]-uridylyl-L-tyrosine + H2O = [protein-PII]-L-tyrosine + UMP + H(+). With respect to regulation, uridylyltransferase (UTase) activity is inhibited by glutamine, while glutamine activates uridylyl-removing (UR) activity. Modifies, by uridylylation and deuridylylation, the PII regulatory proteins (GlnB and homologs), in response to the nitrogen status of the cell that GlnD senses through the glutamine level. Under low glutamine levels, catalyzes the conversion of the PII proteins and UTP to PII-UMP and PPi, while under higher glutamine levels, GlnD hydrolyzes PII-UMP to PII and UMP (deuridylylation). Thus, controls uridylylation state and activity of the PII proteins, and plays an important role in the regulation of nitrogen assimilation and metabolism. This Caulobacter vibrioides (strain ATCC 19089 / CIP 103742 / CB 15) (Caulobacter crescentus) protein is Bifunctional uridylyltransferase/uridylyl-removing enzyme.